Here is a 333-residue protein sequence, read N- to C-terminus: 3-isopropylmalate/3-methylmalate dehydrogenase (333 aa).

Residues arginine 81, arginine 91, arginine 112, and aspartate 203 each coordinate substrate. Positions 203, 227, and 231 each coordinate Mg(2+). 260–272 lines the NAD(+) pocket; it reads GSAPDIAGKKIAN.

Belongs to the isocitrate and isopropylmalate dehydrogenases family. As to quaternary structure, homotetramer. It depends on Mg(2+) as a cofactor. The cofactor is Mn(2+).

It localises to the cytoplasm. It catalyses the reaction (2R,3S)-3-isopropylmalate + NAD(+) = 4-methyl-2-oxopentanoate + CO2 + NADH. The catalysed reaction is (2R,3S)-3-methylmalate + NAD(+) = 2-oxobutanoate + CO2 + NADH. It carries out the reaction (R)-malate + NAD(+) = pyruvate + CO2 + NADH. It functions in the pathway amino-acid biosynthesis; L-leucine biosynthesis; L-leucine from 3-methyl-2-oxobutanoate: step 3/4. The protein operates within amino-acid biosynthesis; L-isoleucine biosynthesis; 2-oxobutanoate from pyruvate: step 3/3. In terms of biological role, catalyzes the oxidation of 3-carboxy-2-hydroxy-4-methylpentanoate (3-isopropylmalate) to 3-carboxy-4-methyl-2-oxopentanoate, which decarboxylates to 4-methyl-2-oxopentanoate (2-oxoisocaproate). Also catalyzes the oxidative decarboxylation of 3-methylmalate to 2-oxobutyrate, and that of D-malate to pyruvate. Cannot use NADP(+) instead of NAD(+). Cannot catalyze the oxidation of L-malate, L-tartrate, D-tartrate, DL-isocitrate, or DL-lactate. The protein is 3-isopropylmalate/3-methylmalate dehydrogenase (leuB) of Methanocaldococcus jannaschii (strain ATCC 43067 / DSM 2661 / JAL-1 / JCM 10045 / NBRC 100440) (Methanococcus jannaschii).